The chain runs to 217 residues: Oxygen regulatory protein NreC (217 aa).

Residues 2–119 (KIVIADDHAV…QLLLAIRTVY (118 aa)) enclose the Response regulatory domain. Residue D53 is modified to 4-aspartylphosphate. One can recognise an HTH luxR-type domain in the interval 148–213 (TSDPFKILSK…ELVEYALKKK (66 aa)). A DNA-binding region (H-T-H motif) is located at residues 172–191 (NKEIAEKLFVSVKTVEAHKT).

Phosphorylated by NreB.

It is found in the cytoplasm. Its function is as follows. Member of the two-component regulatory system NreB/NreC involved in the control of dissimilatory nitrate/nitrite reduction in response to oxygen. Phosphorylated NreC binds to a GC-rich palindromic sequence at the promoters of the nitrate (narGHJI) and nitrite (nir) reductase operons, as well as the putative nitrate transporter gene narT, and activates their expression. The polypeptide is Oxygen regulatory protein NreC (nreC) (Staphylococcus aureus (strain bovine RF122 / ET3-1)).